A 401-amino-acid chain; its full sequence is Nicotinate phosphoribosyltransferase (401 aa).

H224 bears the Phosphohistidine; by autocatalysis mark.

It belongs to the NAPRTase family. Transiently phosphorylated on a His residue during the reaction cycle. Phosphorylation strongly increases the affinity for substrates and increases the rate of nicotinate D-ribonucleotide production. Dephosphorylation regenerates the low-affinity form of the enzyme, leading to product release.

It carries out the reaction nicotinate + 5-phospho-alpha-D-ribose 1-diphosphate + ATP + H2O = nicotinate beta-D-ribonucleotide + ADP + phosphate + diphosphate. Its pathway is cofactor biosynthesis; NAD(+) biosynthesis; nicotinate D-ribonucleotide from nicotinate: step 1/1. In terms of biological role, catalyzes the synthesis of beta-nicotinate D-ribonucleotide from nicotinate and 5-phospho-D-ribose 1-phosphate at the expense of ATP. The chain is Nicotinate phosphoribosyltransferase from Pseudomonas putida (strain ATCC 47054 / DSM 6125 / CFBP 8728 / NCIMB 11950 / KT2440).